A 329-amino-acid chain; its full sequence is N-acetylmuramoyl-L-alanine amidase sle1 (329 aa).

A signal peptide spans 1–26 (MNKKILATAVLGTGALSTLFAHQAEA). 3 consecutive LysM domains span residues 28–71 (TTHT…VLKV), 88–131 (STYT…QLKV), and 152–195 (STYT…KLRV). The 125-residue stretch at 205 to 329 (STRSAQSTYY…YQVRNYKFIH (125 aa)) folds into the Peptidase C51 domain.

It localises to the secreted. It is found in the cell surface. It carries out the reaction Hydrolyzes the link between N-acetylmuramoyl residues and L-amino acid residues in certain cell-wall glycopeptides.. In terms of biological role, peptidoglycan hydrolase involved in the splitting of the septum during cell division. The chain is N-acetylmuramoyl-L-alanine amidase sle1 (sle1) from Staphylococcus haemolyticus (strain JCSC1435).